Here is a 702-residue protein sequence, read N- to C-terminus: Putative methyltransferase NSUN7 (702 aa).

C424 serves as the catalytic Nucleophile. Disordered regions lie at residues 522 to 541 (KSSK…TKAA), 567 to 593 (ETVT…KHKL), and 675 to 702 (PTPS…RRWL). Basic residues predominate over residues 523-534 (SSKREKKKKKSK). Residues 567 to 587 (ETVTKPSLPQKNTAQVGASSQ) show a composition bias toward polar residues. Residues 681–691 (RKGEKPKDDTR) show a composition bias toward basic and acidic residues.

It belongs to the class I-like SAM-binding methyltransferase superfamily. RsmB/NOP family.

May have S-adenosyl-L-methionine-dependent methyl-transferase activity. The chain is Putative methyltransferase NSUN7 (NSUN7) from Macaca fascicularis (Crab-eating macaque).